A 323-amino-acid polypeptide reads, in one-letter code: Galactosylgalactosylxylosylprotein 3-beta-glucuronosyltransferase 2 (323 aa).

Residues 1–2 (MK) are Cytoplasmic-facing. Residues 3–23 (SALFTRFFILLPWILIVIIML) form a helical; Signal-anchor for type II membrane protein membrane-spanning segment. The Lumenal portion of the chain corresponds to 24–323 (DVDTRRPVPP…YHLDTVKIEV (300 aa)). The disordered stretch occupies residues 51-80 (RLPLRRGGPAHGTQKRNQSRPQPQPEPQLP). N-linked (GlcNAc...) asparagine glycosylation occurs at Asn-67. UDP-alpha-D-glucuronate-binding positions include 87–89 (PTY), Asp-118, Arg-155, Arg-160, and 185–187 (DDD). Asp-187 provides a ligand contact to Mn(2+). An interaction with galactose moiety of substrate glycoprotein region spans residues 234–243 (WRADRPFAID). The Proton donor/acceptor role is filled by Glu-273. A glycan (N-linked (GlcNAc...) asparagine) is linked at Asn-292. 300–302 (HTR) is a binding site for UDP-alpha-D-glucuronate.

Belongs to the glycosyltransferase 43 family. As to quaternary structure, homodimer. It depends on Mn(2+) as a cofactor. As to expression, expressed in the trachea, retina, spinal cord, hippocampus and other brain regions, and, at lower levels, in testis and ovary.

It localises to the golgi apparatus membrane. It catalyses the reaction 3-O-(beta-D-galactosyl-(1-&gt;3)-beta-D-galactosyl-(1-&gt;4)-beta-D-xylosyl)-L-seryl-[protein] + UDP-alpha-D-glucuronate = 3-O-(beta-D-GlcA-(1-&gt;3)-beta-D-Gal-(1-&gt;3)-beta-D-Gal-(1-&gt;4)-beta-D-Xyl)-L-seryl-[protein] + UDP + H(+). It functions in the pathway protein modification; protein glycosylation. In terms of biological role, involved in the biosynthesis of L2/HNK-1 carbohydrate epitope on both glycolipids and glycoproteins. The sequence is that of Galactosylgalactosylxylosylprotein 3-beta-glucuronosyltransferase 2 (B3GAT2) from Homo sapiens (Human).